Reading from the N-terminus, the 243-residue chain is Small ribosomal subunit protein uS3 (243 aa).

The 72-residue stretch at 22–93 (LNEFLTRELA…SVELYAEKVA (72 aa)) folds into the KH type-2 domain. Residues 195–243 (QQGKNGPKKPQPDHILVTEPKDEPAPLEPTSDIRSLAPAPLPQPVAAVA) are disordered.

This sequence belongs to the universal ribosomal protein uS3 family.

The protein is Small ribosomal subunit protein uS3 (RpS3) of Manduca sexta (Tobacco hawkmoth).